A 256-amino-acid polypeptide reads, in one-letter code: Small ribosomal subunit protein eS1 (256 aa).

At Ala2 the chain carries N-acetylalanine; partial.

Belongs to the eukaryotic ribosomal protein eS1 family. Component of the small ribosomal subunit. Mature ribosomes consist of a small (40S) and a large (60S) subunit. The 40S subunit contains about 33 different proteins and 1 molecule of RNA (18S). The 60S subunit contains about 49 different proteins and 3 molecules of RNA (25S, 5.8S and 5S).

It is found in the cytoplasm. This is Small ribosomal subunit protein eS1 (rps1) from Sclerotinia sclerotiorum (strain ATCC 18683 / 1980 / Ss-1) (White mold).